A 269-amino-acid chain; its full sequence is Arginine and glutamate-rich protein 1-B (269 aa).

Positions 1-57 (MGRSRSRSSSRSKHSKTSKHSKKRSRSRSRSRDRERKRRSKSRESKRNRRRESRSRS) are enriched in basic residues. The segment at 1 to 70 (MGRSRSRSSS…TATSRRDRER (70 aa)) is necessary and sufficient for RNA binding. 2 disordered regions span residues 1–109 (MGRS…MERQ) and 233–269 (RMKLEQERQKQQKEEQKMILGKGKSRPKLSFSLKASE). 3 stretches are compositionally biased toward basic and acidic residues: residues 64–80 (SRRDRERAASPPERIDI), 89–109 (SAVDEKQKKEEEEKKVEMERQ), and 233–249 (RMKLEQERQKQQKEEQK). A necessary and sufficient for transcriptional regulation region spans residues 71–269 (AASPPERIDI…KLSFSLKASE (199 aa)).

The protein belongs to the ARGLU1 family.

It is found in the nucleus. The protein localises to the nucleus speckle. The protein resides in the chromosome. Its function is as follows. Dual function regulator of gene expression; regulator of transcription and modulator of alternative splicing. General coactivator of nuclear receptor-induced gene expression. The protein is Arginine and glutamate-rich protein 1-B (arglu1b) of Danio rerio (Zebrafish).